We begin with the raw amino-acid sequence, 158 residues long: Egg cell-secreted protein 1.1 (158 aa).

Positions 1–27 (MASKSSFMATFNIVTLMLMVASSTVTA) are cleaved as a signal peptide. Asn122 carries an N-linked (GlcNAc...) asparagine glycan.

Belongs to the plant egg cell-secreted peptide family. As to expression, restricted to female reproductive tissues, specifically accumulating in storage vesicles of the unfertilized egg cell.

Its subcellular location is the cytoplasmic vesicle. It is found in the secreted. Involved in the regulation of gamete interactions during the double fertilization and to prevent multiple-pollen tube attraction; mediates the redistribution of the gamete fusogen HAP2/GCS1 to the cell surface after secretion upon sperm arrival. The sequence is that of Egg cell-secreted protein 1.1 (EC1.1) from Arabidopsis thaliana (Mouse-ear cress).